We begin with the raw amino-acid sequence, 509 residues long: Group 3 secretory phospholipase A2 (509 aa).

The N-terminal stretch at 1–19 (MGVQAGLFGMLGFLGVALG) is a signal peptide. The interval 123–149 (ESPAGARKKRAAGQSGVPGGGHQREKR) is disordered. Residues 150–291 (GWTMPGTLWC…SWSSRATSPT (142 aa)) are phospholipase A2-like. Ca(2+)-binding residues include tryptophan 158, glycine 160, and glycine 162. Cystine bridges form between cysteine 159/cysteine 181, cysteine 180/cysteine 220, cysteine 187/cysteine 213, and cysteine 211/cysteine 244. Residue asparagine 167 is glycosylated (N-linked (GlcNAc...) asparagine). Residue histidine 184 is part of the active site. Position 185 (aspartate 185) interacts with Ca(2+). The active site involves aspartate 214. Asparagine 280 carries N-linked (GlcNAc...) asparagine glycosylation. Residues 283–354 (WSSRATSPTP…LQGPQGGLKP (72 aa)) form a disordered region. Low complexity predominate over residues 284-296 (SSRATSPTPSSRS). The span at 302-322 (PRQKQHLRKGPPHQKGSKRPS) shows a compositional bias: basic residues. N-linked (GlcNAc...) asparagine glycans are attached at residues asparagine 325, asparagine 396, and asparagine 439. A disordered region spans residues 458–482 (QQRRHQLQDKGTDERQPWPSEPLRG). Residues 463 to 473 (QLQDKGTDERQ) are compositionally biased toward basic and acidic residues.

It belongs to the phospholipase A2 family. The cofactor is Ca(2+). Post-translationally, N-glycosylation does not affect the catalytic activity, but is required for proper secretion. A nonglycosylated form is observed in several cell types. In terms of processing, in several cell types, the N- and C-termini are cleaved off. In terms of tissue distribution, expressed in kidney, heart, liver, and skeletal muscle. Also present in placenta and peripheral blood leukocytes. Not detected in colon, thymus, spleen and small intestine. In lung, expressed in bronchial epithelial cells and alveolar macrophages, but scarcely detected in alveolar epithelium, arterial walls and interstitial fibroblasts (at protein level). In joints of osteoarthritis and rheumatoid arthritis, expressed in endothelial cells (at protein level). In normal heart, detected in some vessels. In myocardial tissues with acute infarction, expressed in vascular endothelial cells adjacent to cardiomyocytes and those in lesions with granulation. Expression in cardiomyocytes is scarce (at protein level). In uterus, breast and colon cancers, detected in tumor cells and neighboring microvascular endothelium, but not in normal glandular tissues (at protein level). Expressed in dermal resting mast cells (at protein level) and pulmonary mast cells. Expressed in neuronal fibers (at protein level). Highly expressed in dorsal root ganglia neurons (at protein level). Expressed in Purkinje cells in cerebellum (at protein level). In stomach is preferentially expressed in neuronal fibers and in microvascular endothelium. Sparsely expressed in normal aorta (at protein level). Highly expressed in macrophages and smooth muscle cells in aorta with atheroma.

It is found in the secreted. Its subcellular location is the cell membrane. The protein resides in the cytoplasm. The protein localises to the cytoskeleton. It localises to the microtubule organizing center. It is found in the centrosome. Its subcellular location is the centriole. The protein resides in the recycling endosome. The enzyme catalyses a 1,2-diacyl-sn-glycero-3-phosphocholine + H2O = a 1-acyl-sn-glycero-3-phosphocholine + a fatty acid + H(+). It carries out the reaction 1-hexadecanoyl-2-(9Z,12Z-octadecadienoyl)-sn-glycero-3-phosphocholine + H2O = (9Z,12Z)-octadecadienoate + 1-hexadecanoyl-sn-glycero-3-phosphocholine + H(+). It catalyses the reaction 1-hexadecanoyl-2-(5Z,8Z,11Z,14Z-eicosatetraenoyl)-sn-glycero-3-phosphocholine + H2O = 1-hexadecanoyl-sn-glycero-3-phosphocholine + (5Z,8Z,11Z,14Z)-eicosatetraenoate + H(+). The catalysed reaction is 1-hexadecanoyl-2-(9Z,12Z-octadecadienoyl)-sn-glycero-3-phosphoethanolamine + H2O = 1-hexadecanoyl-sn-glycero-3-phosphoethanolamine + (9Z,12Z)-octadecadienoate + H(+). The enzyme catalyses 1-hexadecanoyl-2-(5Z,8Z,11Z,14Z-eicosatetraenoyl)-sn-glycero-3-phosphoethanolamine + H2O = 1-hexadecanoyl-sn-glycero-3-phosphoethanolamine + (5Z,8Z,11Z,14Z)-eicosatetraenoate + H(+). Its activity is regulated as follows. Arachidonic acid release is markedly increased by glypican, a glycosylphosphatidylinositol-anchored heparan sulfate proteoglycan. Functionally, secretory calcium-dependent phospholipase A2 that primarily targets extracellular phospholipids. Hydrolyzes the ester bond of the fatty acyl group attached at sn-2 position of phospholipids without apparent head group selectivity. Contributes to phospholipid remodeling of low-density lipoprotein (LDL) and high-density lipoprotein (HDL) particles. Hydrolyzes LDL phospholipids releasing unsaturated fatty acids that regulate macrophage differentiation toward foam cells. May act in an autocrine and paracrine manner. Secreted by immature mast cells, acts on nearby fibroblasts upstream to PTDGS to synthesize prostaglandin D2 (PGD2), which in turn promotes mast cell maturation and degranulation via PTGDR. Secreted by epididymal epithelium, acts on immature sperm cells within the duct, modulating the degree of unsaturation of the fatty acyl components of phosphatidylcholines required for acrosome assembly and sperm cell motility. Facilitates the replacement of fatty acyl chains in phosphatidylcholines in sperm membranes from omega-6 and omega-9 to omega-3 polyunsaturated fatty acids (PUFAs). Coupled to lipoxygenase pathway, may process omega-6 PUFAs to generate oxygenated lipid mediators in the male reproductive tract. At pericentrosomal preciliary compartment, negatively regulates ciliogenesis likely by regulating endocytotic recycling of ciliary membrane protein. Coupled to cyclooxygenase pathway provides arachidonate to generate prostaglandin E2 (PGE2), a potent immunomodulatory lipid in inflammation and tumorigenesis. At colonic epithelial barrier, preferentially hydrolyzes phospholipids having arachidonate and docosahexaenoate at sn-2 position, contributing to the generation of oxygenated metabolites involved in colonic stem cell homeostasis. Releases C16:0 and C18:0 lysophosphatidylcholine subclasses from neuron plasma membranes and promotes neurite outgrowth and neuron survival. This is Group 3 secretory phospholipase A2 from Homo sapiens (Human).